The following is a 196-amino-acid chain: MEPQLILGSSSPRRKSILQYFRIPFTCISPSFEERSVPYQGDPAAYSQELAVGKAESIVQDHNPEGVILTADTVVIYKGKVFNKPSSRDEAIEMLKTLSGQTHSIITSVALLQQKKLMVGQETTQVTFNQLPEKYLGRYVEAFSTLDKCGGYSTQEGGGLIIHNIQGCAYNVQGLPIRTLYHLLLEFDINLWDYLV.

Asp72 (proton acceptor) is an active-site residue.

The protein belongs to the Maf family. YhdE subfamily. The cofactor is a divalent metal cation.

It localises to the cytoplasm. The catalysed reaction is dTTP + H2O = dTMP + diphosphate + H(+). It carries out the reaction UTP + H2O = UMP + diphosphate + H(+). In terms of biological role, nucleoside triphosphate pyrophosphatase that hydrolyzes dTTP and UTP. May have a dual role in cell division arrest and in preventing the incorporation of modified nucleotides into cellular nucleic acids. In Chlamydia caviae (strain ATCC VR-813 / DSM 19441 / 03DC25 / GPIC) (Chlamydophila caviae), this protein is dTTP/UTP pyrophosphatase.